Here is a 484-residue protein sequence, read N- to C-terminus: Poly(A) RNA polymerase GLD2 (484 aa).

2 positions are modified to phosphoserine: Ser-62 and Ser-69. The tract at residues 72 to 97 (FRGRKRLSDEKNLPLDGKRQRFHSPH) is disordered. The Nuclear localization signal motif lies at 76–92 (KRLSDEKNLPLDGKRQR). Positions 77 to 90 (RLSDEKNLPLDGKR) are enriched in basic and acidic residues. The residue at position 95 (Ser-95) is a Phosphoserine. Mg(2+) contacts are provided by Asp-213 and Asp-215. Positions 386–440 (NLGDLLLGFLKYYATEFDWNSQMISVREAKAIPRPDGIEWRNKYICVEEPFDGTN) constitute a PAP-associated domain.

The protein belongs to the DNA polymerase type-B-like family. GLD2 subfamily. Interacts with CPEB1, CPEB2, CPSF1 and PABPC1. Interacts with QKI isoform QKI7; promoting recruitment to miRNA miR-122 and miR-122 stabilization. Mg(2+) is required as a cofactor. The cofactor is Mn(2+). Expressed in brain. Within brain, it is expressed in cerebellum, hippocampus and medulla.

It is found in the cytoplasm. Its subcellular location is the nucleus. The enzyme catalyses RNA(n) + ATP = RNA(n)-3'-adenine ribonucleotide + diphosphate. Functionally, cytoplasmic poly(A) RNA polymerase that adds successive AMP monomers to the 3'-end of specific RNAs, forming a poly(A) tail. In contrast to the canonical nuclear poly(A) RNA polymerase, it only adds poly(A) to selected cytoplasmic mRNAs. Does not play a role in replication-dependent histone mRNA degradation. Adds a single nucleotide to the 3' end of specific miRNAs, monoadenylation stabilizes and prolongs the activity of some but not all miRNAs. The sequence is that of Poly(A) RNA polymerase GLD2 from Homo sapiens (Human).